We begin with the raw amino-acid sequence, 633 residues long: DNA mismatch repair protein MutL (633 aa).

This sequence belongs to the DNA mismatch repair MutL/HexB family.

This protein is involved in the repair of mismatches in DNA. It is required for dam-dependent methyl-directed DNA mismatch repair. May act as a 'molecular matchmaker', a protein that promotes the formation of a stable complex between two or more DNA-binding proteins in an ATP-dependent manner without itself being part of a final effector complex. This Macrococcus caseolyticus (strain JCSC5402) (Macrococcoides caseolyticum) protein is DNA mismatch repair protein MutL.